The following is a 660-amino-acid chain: MEGDGSDLEPPDAGDDSKSENGENAPIYCICRKPDINCFMIGCDNCNEWFHGDCIRITEKMAKAIREWYCRECREKDPKLEIRYRHKKCRERDGSERAGSEPRDEGGGRKRPASDPELQRRAGSGTGVGAMLARGSASPHKSSPQPLVATPSQHHHQQQQQQQQQIKRSARMCGECEACRRTEDCGHCDFCRDMKKFGGPNKIRQKCRLRQCQLRARESYKYFPSSLSPVTPSEALPRPRRPPPTQQQPQQSQKLGRIREDEGTVLSSVVKEPPEATATPEPLSDEDLALDPDLYQDFCAGAFDDHGLPWMSDAEESPFLDPALRKRAVKVKHVKRREKKSEKKKEERYKRHRQKQKHKDKWKHPERADAKDPASLPQCLGPGCVRAAQPGSKYCSDDCGMKLAANRIYEILPQRIQQWQQSPCIAEEHGKKLLERIRREQQSARTRLQEMERRFHELEAIILRAKQQAVREDEENNENDSDDTDLQIFCVSCGHPINPRVALRHMERCYAKYESQTSFGSMYPTRIEGATRLFCDVYNPQSKTYCKRLQVLCPEHSRDPKVPADEVCGCPLVRDVFELTGDFCRLPKRQCNRHYCWEKLRRAEVDLERVRVWYKLDELFEQERNVRTAMTNRAGLLALMLHQTIQHDPLTTDLRSSADR.

M1 carries the N-acetylmethionine modification. Residues M1 to G14 show a composition bias toward acidic residues. Residues M1–E20 are disordered. 2 positions are modified to phosphoserine: S6 and S19. The PHD-type zinc-finger motif lies at Y28–K76. Residues E91–R120 show a composition bias toward basic and acidic residues. Residues E91–I166 form a disordered region. S124 is modified (phosphoserine). The CXXC-type zinc-finger motif lies at Q164–Q213. 8 residues coordinate Zn(2+): C173, C176, C179, C185, C188, C191, C207, and C212. 2 disordered regions span residues F223 to D287 and A328 to S375. Residue S228 is modified to Phosphoserine. At T231 the chain carries Phosphothreonine. A Glycyl lysine isopeptide (Lys-Gly) (interchain with G-Cter in SUMO2) cross-link involves residue K254. The span at A328–E338 shows a compositional bias: basic residues. A compositionally biased stretch (basic and acidic residues) spans K339–Y349. The span at K350–W362 shows a compositional bias: basic residues. Positions K363 to D372 are enriched in basic and acidic residues. Positions A426 to N479 form a coiled coil.

Component of the SET1 complex, at least composed of the catalytic subunit (SETD1A or SETD1B), WDR5, WDR82, RBBP5, ASH2L/ASH2, CXXC1/CFP1, HCFC1 and DPY30. Interacts with SETD1A. Interacts with ZNF335. Interacts with PRDM9; this interaction does not link PRDM9-activated recombination hotspot sites with DSB machinery and is not required for the hotspot recognition pathway. Interacts with histone H3K4me3. In terms of tissue distribution, expressed in seminiferous tubules and in both germ cells and Sertoli cells. Highly expressed in spermatogonia, weakly expressed in leptonema and zygonema, and then again high expression in pachynema and diplonema, decreasing to undetectable levels in spermatids.

The protein localises to the nucleus speckle. It is found in the nucleus. Its function is as follows. Transcriptional activator that exhibits a unique DNA binding specificity for CpG unmethylated motifs with a preference for CpGG. The sequence is that of CXXC-type zinc finger protein 1 (Cxxc1) from Mus musculus (Mouse).